A 135-amino-acid polypeptide reads, in one-letter code: ATP synthase epsilon chain (135 aa).

This sequence belongs to the ATPase epsilon chain family. As to quaternary structure, F-type ATPases have 2 components, CF(1) - the catalytic core - and CF(0) - the membrane proton channel. CF(1) has five subunits: alpha(3), beta(3), gamma(1), delta(1), epsilon(1). CF(0) has three main subunits: a, b and c.

It is found in the cell inner membrane. Produces ATP from ADP in the presence of a proton gradient across the membrane. The polypeptide is ATP synthase epsilon chain (Rhizobium leguminosarum bv. trifolii (strain WSM2304)).